We begin with the raw amino-acid sequence, 249 residues long: Adenylate kinase (249 aa).

43–48 (GAGKGT) contributes to the ATP binding site. The segment at 63–92 (ATGDMLRAQVAAKTALGVEAKKIMDQGGLV) is NMP. AMP-binding positions include Thr64, Arg69, 90 to 92 (GLV), 119 to 122 (GFPR), and Gln126. The segment at 160-197 (GRLVHPASGRSYHKLFNPPKKNMIDDITGEPLVQRSDD) is LID. Residues Arg161 and 170-171 (SY) contribute to the ATP site. Positions 194 and 205 each coordinate AMP. Residue Gln233 coordinates ATP.

Belongs to the adenylate kinase family. AK2 subfamily. In terms of assembly, monomer.

The protein localises to the cytoplasm. The protein resides in the cytosol. It is found in the mitochondrion intermembrane space. It catalyses the reaction AMP + ATP = 2 ADP. Its function is as follows. Catalyzes the reversible transfer of the terminal phosphate group between ATP and AMP. Plays an important role in cellular energy homeostasis and in adenine nucleotide metabolism. Adenylate kinase activity is critical for regulation of the phosphate utilization and the AMP de novo biosynthesis pathways. This is Adenylate kinase from Scheffersomyces stipitis (strain ATCC 58785 / CBS 6054 / NBRC 10063 / NRRL Y-11545) (Yeast).